We begin with the raw amino-acid sequence, 473 residues long: Zinc transporter SLC39A7 (473 aa).

A helical transmembrane segment spans residues V11–H31. 2 stretches are compositionally biased toward basic and acidic residues: residues G44–H56 and H66–H114. The disordered stretch occupies residues G44–S120. H66 carries the post-translational modification Pros-methylhistidine. A run of 3 helical transmembrane segments spans residues A138 to V158, L169 to I189, and G214 to E234. Residues G243–S316 are disordered. A phosphoserine mark is found at S278 and S279. Residues R298–S316 show a composition bias toward basic and acidic residues. Residues L388–A408 form a helical membrane-spanning segment. Positions G428–S473 are disordered. Over residues A431–L442 the composition is skewed to polar residues. Basic and acidic residues predominate over residues E452–Q462. A compositionally biased stretch (polar residues) spans E463–S473.

Belongs to the ZIP transporter (TC 2.A.5) family. KE4/Catsup subfamily. Homodimer. Methylation at some His residue by METTL9 leads to reduced zinc-binding. In terms of processing, rapidly phosphorylated by CK2 following Zn(2+) treatment. This phosphorylation is required for efficient cytosolic Zn(2+) release.

The protein resides in the endoplasmic reticulum membrane. It is found in the golgi apparatus. It localises to the cis-Golgi network membrane. It carries out the reaction Zn(2+)(in) = Zn(2+)(out). In terms of biological role, transports Zn(2+) from the endoplasmic reticulum (ER)/Golgi apparatus to the cytosol, playing an essential role in the regulation of cytosolic zinc levels. Acts as a gatekeeper of zinc release from intracellular stores, requiring post-translational activation by phosphorylation on residues, resulting in activation of multiple downstream pathways leading to cell growth and proliferation. Has an essential role in B cell development and is required for proper B cell receptor signaling. Plays an important role in maintaining intestinal epithelial homeostasis and skin dermis development by regulating ER function. Controls cell signaling pathways involved in glucose metabolism in skeletal muscle. Has a protective role against ER stress in different biological contexts. Mediates Zn(2+)-induced ferroptosis. In Sus scrofa (Pig), this protein is Zinc transporter SLC39A7 (SLC39A7).